The chain runs to 397 residues: MAKQKFERTKPHVNIGTIGHIDHGKTTLTAAITKVLHDAYPDLNPFTPFDQIDKAPEEKARGITISIAHVEYQTDTRHYAHVDCPGHADYIKNMITGAAQMDGAILVVSATDGPMPQTKEHVLLARQVGVPYIVVALNKADMVDDEEILELVELEVRELLSSYEFPGDDVPVVRVSALKALEGDKEWGAKLLELMAAVDESIPEPQRDIDRPFLMPIEDVFTITGRGTVVTGRVERGIVKVNETVEIVGIKPETTSTTVTGVEMFRKLLDEGRAGDNVGLLLRGIKREDVERGQVIVKPKSITPHTVFEARVYILNKDEGGRHTPFFKNYRPQFYFRTTDVTGVVTLPEGTEMVMPGDNTEMTVELIQPIAMEEGLRFAIREGGRTVGAGQVTKVLK.

Positions 10–206 (KPHVNIGTIG…AVDESIPEPQ (197 aa)) constitute a tr-type G domain. The G1 stretch occupies residues 19 to 26 (GHIDHGKT). GTP is bound at residue 19 to 26 (GHIDHGKT). T26 is a binding site for Mg(2+). Residues 62-66 (GITIS) form a G2 region. The tract at residues 83–86 (DCPG) is G3. Residues 83-87 (DCPGH) and 138-141 (NKAD) contribute to the GTP site. Positions 138–141 (NKAD) are G4. Positions 176-178 (SAL) are G5.

This sequence belongs to the TRAFAC class translation factor GTPase superfamily. Classic translation factor GTPase family. EF-Tu/EF-1A subfamily. Monomer.

The protein localises to the cytoplasm. It catalyses the reaction GTP + H2O = GDP + phosphate + H(+). Its function is as follows. GTP hydrolase that promotes the GTP-dependent binding of aminoacyl-tRNA to the A-site of ribosomes during protein biosynthesis. The polypeptide is Elongation factor Tu (Frankia casuarinae (strain DSM 45818 / CECT 9043 / HFP020203 / CcI3)).